The sequence spans 579 residues: Suppressor of cytokine signaling 7 (579 aa).

3 disordered regions span residues 1–25 (MVFR…GPSE), 89–270 (PPPP…RTQS), and 295–315 (QRGL…RSLS). Pro residues-rich tracts occupy residues 89-99 (PPPPQPPPPAA), 155-165 (PPGPELPPVPF), and 185-196 (QPPPPPPPPGPL). Residues 124-492 (AESLETNSCS…GKFLYFLRSR (369 aa)) form a mediates interaction with SORBS3 region. Residues 206–217 (GSFKIRLSRLFR) are compositionally biased toward basic residues. Residues 301–311 (PHPPTPPPPPR) show a composition bias toward pro residues. Positions 398 to 507 (WYWGPMNWED…PTPVQLLYPV (110 aa)) constitute an SH2 domain. The SOCS box domain occupies 502-552 (QLLYPVSRFSNVKSLQHLCRFRIRQLVRIDHIPDLPLPKPLISYIRKFYYY).

In terms of assembly, substrate-recognition component of the ECS(SOCS7) complex, composed of SOCS7, CUL5, ELOB, ELOC and RNF7/RBX2. Interacts, via the third proline-rich region, with the second SH3 domain of the adapter protein NCK1. Also interacts with GRB2, INSR, PLCG1, SORBS3/vinexin, and phosphorylated STAT3 and STAT5. Interacts with SEPT6. Interacts with phosphorylated IRS4 and PIK3R1. In terms of tissue distribution, widely expressed with higher expression in brain and testis where it is expressed by spermatocytes and early spermatids. Also significantly expressed in spleen, skeletal muscle and kidney.

The protein resides in the cytoplasm. It is found in the nucleus. Its subcellular location is the cell membrane. The protein operates within protein modification; protein ubiquitination. Its function is as follows. Substrate-recognition component of a cullin-5-RING E3 ubiquitin-protein ligase complex (ECS complex, also named CRL5 complex), which mediates the ubiquitination and subsequent proteasomal degradation of target proteins, such as DAB1 and IRS1. Specifically recognizes and binds phosphorylated proteins via its SH2 domain, promoting their ubiquitination. The ECS(SOCS7) complex acts as a key regulator of reelin signaling by mediating ubiquitination and degradation of phosphorylated DAB1 in the cortical plate of the developing cerebral cortex, thereby regulating neuron positioning during cortex development. Functions in insulin signaling and glucose homeostasis through IRS1 ubiquitination and subsequent proteasomal degradation. Also inhibits prolactin, growth hormone and leptin signaling by preventing STAT3 and STAT5 activation, sequestering them in the cytoplasm and reducing their binding to DNA. This is Suppressor of cytokine signaling 7 from Mus musculus (Mouse).